A 512-amino-acid chain; its full sequence is D-alanine--D-alanyl carrier protein ligase (512 aa).

152 to 153 is an ATP binding site; sequence TS. Asp-199 is a binding site for D-alanine. 294-299 is an ATP binding site; it reads NAYGPT. Val-303 is a binding site for D-alanine. ATP is bound by residues Asp-385, 397–400, and Lys-499; that span reads YGGR. Lys-499 is a D-alanine binding site.

The protein belongs to the ATP-dependent AMP-binding enzyme family. DltA subfamily.

It is found in the cytoplasm. The catalysed reaction is holo-[D-alanyl-carrier protein] + D-alanine + ATP = D-alanyl-[D-alanyl-carrier protein] + AMP + diphosphate. The protein operates within cell wall biogenesis; lipoteichoic acid biosynthesis. In terms of biological role, catalyzes the first step in the D-alanylation of lipoteichoic acid (LTA), the activation of D-alanine and its transfer onto the D-alanyl carrier protein (Dcp) DltC. In an ATP-dependent two-step reaction, forms a high energy D-alanyl-AMP intermediate, followed by transfer of the D-alanyl residue as a thiol ester to the phosphopantheinyl prosthetic group of the Dcp. D-alanylation of LTA plays an important role in modulating the properties of the cell wall in Gram-positive bacteria, influencing the net charge of the cell wall. The polypeptide is D-alanine--D-alanyl carrier protein ligase (Streptococcus pyogenes serotype M49 (strain NZ131)).